We begin with the raw amino-acid sequence, 534 residues long: Chaperonin GroEL (534 aa).

Residues Thr29–Pro32, Asp86–Thr90, Gly413, and Asp494 each bind ATP.

It belongs to the chaperonin (HSP60) family. As to quaternary structure, forms a cylinder of 14 subunits composed of two heptameric rings stacked back-to-back. Interacts with the co-chaperonin GroES.

It is found in the cytoplasm. The catalysed reaction is ATP + H2O + a folded polypeptide = ADP + phosphate + an unfolded polypeptide.. Together with its co-chaperonin GroES, plays an essential role in assisting protein folding. The GroEL-GroES system forms a nano-cage that allows encapsulation of the non-native substrate proteins and provides a physical environment optimized to promote and accelerate protein folding. This chain is Chaperonin GroEL, found in Mycoplasmoides gallisepticum (strain R(low / passage 15 / clone 2)) (Mycoplasma gallisepticum).